We begin with the raw amino-acid sequence, 452 residues long: MALPVVAIIGRPNVGKSTLVNRLCRSRDAIVHDEPGVTRDRTYQEGFWGGRTFRVVDTGGLVFDDDSEFLPEIREQASLAMAEACVALVIVDGQQGLTAADEAIAAWLRQQKCPVLLGVNKCESPEQGLAMAAEFWALGLGEPKPISAIHGAGTGDLLDQVLDFLPPQDEEEAPEPIQMAIVGRPNVGKSSLLNTVCGENRAIVSPIRGTTRDTIDTSIEREGQSWKLLDTAGIRRRRSVNYGPEFFGINRSFKAIERSDVCVLVIDAEEGVTEQDQRLAGRIEEEGRACLVVVNKWDLVEKDSHTMPAMEKELRSKLYFLEWAPMLFISALTGQRVERIFPLAVLAVEQHRRRVTTAVVNEVLQEALSWRSPPTTRGGRQGRLYYGTQVAVRPPSFTLFVNEPKLFGDTYRRYVERQIRQGLGFEGSPVRLFWRGKQQRDAERDQARAASR.

2 EngA-type G domains span residues 4-169 and 177-352; these read PVVA…PPQD and IQMA…EQHR. GTP contacts are provided by residues 10-17, 57-61, 120-123, 183-190, 230-234, and 295-298; these read GRPNVGKS, DTGGL, NKCE, DTAGI, and NKWD. A KH-like domain is found at 353 to 438; it reads RRVTTAVVNE…PVRLFWRGKQ (86 aa).

This sequence belongs to the TRAFAC class TrmE-Era-EngA-EngB-Septin-like GTPase superfamily. EngA (Der) GTPase family. As to quaternary structure, associates with the 50S ribosomal subunit.

Its function is as follows. GTPase that plays an essential role in the late steps of ribosome biogenesis. The polypeptide is GTPase Der (Synechococcus sp. (strain RCC307)).